We begin with the raw amino-acid sequence, 181 residues long: Ubiquitin-conjugating enzyme E2 19 (181 aa).

Positions 1 to 10 (MATVNGYTGN) are enriched in polar residues. The tract at residues 1–33 (MATVNGYTGNTPAATTPAATGSKQSAPPTKTVD) is disordered. Low complexity predominate over residues 11 to 20 (TPAATTPAAT). The region spanning 36-181 (SVLKRLQSEL…VEKLYKPLNA (146 aa)) is the UBC core domain. Cys120 functions as the Glycyl thioester intermediate in the catalytic mechanism.

The protein belongs to the ubiquitin-conjugating enzyme family. Interacts with OR. Binds to LOT1. In terms of tissue distribution, expressed in all tissues with cell division activities and in mature leaves.

The protein resides in the cytoplasm. Its subcellular location is the nucleus. It carries out the reaction S-ubiquitinyl-[E1 ubiquitin-activating enzyme]-L-cysteine + [E2 ubiquitin-conjugating enzyme]-L-cysteine = [E1 ubiquitin-activating enzyme]-L-cysteine + S-ubiquitinyl-[E2 ubiquitin-conjugating enzyme]-L-cysteine.. The protein operates within protein modification; protein ubiquitination. Accepts the ubiquitin from the E1 complex and catalyzes its covalent attachment to other proteins. Part of the anaphase-promoting complex (APC). May have a key function during cell cycle and be involved in cyclin B1 degradation. Triggers OR ubiquitination that mediates its subsequent nuclear localization. Involved in the repression of early light-induced proteins (ELIPs, e.g. ELIP1 and ELIP2) expression, probably via OR nuclear relocalization. This is Ubiquitin-conjugating enzyme E2 19 from Arabidopsis thaliana (Mouse-ear cress).